Reading from the N-terminus, the 679-residue chain is UvrABC system protein B (679 aa).

Positions glutamate 25 to valine 176 constitute a Helicase ATP-binding domain. Position 38–45 (glycine 38–threonine 45) interacts with ATP. The short motif at tyrosine 91 to isoleucine 114 is the Beta-hairpin element. Positions glutamine 429–alanine 591 constitute a Helicase C-terminal domain. The 36-residue stretch at proline 638–lysine 673 folds into the UVR domain.

Belongs to the UvrB family. As to quaternary structure, forms a heterotetramer with UvrA during the search for lesions. Interacts with UvrC in an incision complex.

The protein localises to the cytoplasm. The UvrABC repair system catalyzes the recognition and processing of DNA lesions. A damage recognition complex composed of 2 UvrA and 2 UvrB subunits scans DNA for abnormalities. Upon binding of the UvrA(2)B(2) complex to a putative damaged site, the DNA wraps around one UvrB monomer. DNA wrap is dependent on ATP binding by UvrB and probably causes local melting of the DNA helix, facilitating insertion of UvrB beta-hairpin between the DNA strands. Then UvrB probes one DNA strand for the presence of a lesion. If a lesion is found the UvrA subunits dissociate and the UvrB-DNA preincision complex is formed. This complex is subsequently bound by UvrC and the second UvrB is released. If no lesion is found, the DNA wraps around the other UvrB subunit that will check the other stand for damage. The sequence is that of UvrABC system protein B from Synechococcus sp. (strain CC9311).